A 124-amino-acid polypeptide reads, in one-letter code: PEP-dependent dihydroxyacetone kinase 1, phosphoryl donor subunit DhaM (124 aa).

The PTS EIIA type-4 domain maps to 4 to 124; the sequence is PYGVVIISHS…AANLKTIEIK (121 aa). H12 functions as the Tele-phosphohistidine intermediate in the catalytic mechanism.

This sequence belongs to the PEP-utilizing enzyme family. In terms of assembly, homodimer. The dihydroxyacetone kinase complex is composed of a homodimer of DhaM, a homodimer of DhaK and the subunit DhaL.

Its subcellular location is the cytoplasm. It catalyses the reaction dihydroxyacetone + phosphoenolpyruvate = dihydroxyacetone phosphate + pyruvate. Functionally, component of the dihydroxyacetone kinase complex, which is responsible for the phosphoenolpyruvate (PEP)-dependent phosphorylation of dihydroxyacetone. DhaM serves as the phosphoryl donor. Is phosphorylated by phosphoenolpyruvate in an EI- and HPr-dependent reaction, and a phosphorelay system on histidine residues finally leads to phosphoryl transfer to DhaL and dihydroxyacetone. In Listeria innocua serovar 6a (strain ATCC BAA-680 / CLIP 11262), this protein is PEP-dependent dihydroxyacetone kinase 1, phosphoryl donor subunit DhaM.